Reading from the N-terminus, the 141-residue chain is Large ribosomal subunit protein uL16 (141 aa).

The protein belongs to the universal ribosomal protein uL16 family. Part of the 50S ribosomal subunit.

Its function is as follows. Binds 23S rRNA and is also seen to make contacts with the A and possibly P site tRNAs. The chain is Large ribosomal subunit protein uL16 from Campylobacter concisus (strain 13826).